A 715-amino-acid chain; its full sequence is Fatty acid oxidation complex subunit alpha (715 aa).

The enoyl-CoA hydratase/isomerase stretch occupies residues 1-189; that stretch reads MIYQGETLSV…KVGAIDAVVA (189 aa). Substrate is bound at residue Asp-296. A 3-hydroxyacyl-CoA dehydrogenase region spans residues 311 to 715; the sequence is AKATRHAAVL…EMAAQGKTFY (405 aa). Residues Met-325, Asp-344, 401-403, Lys-408, and Ser-430 contribute to the NAD(+) site; that span reads VVE. The For 3-hydroxyacyl-CoA dehydrogenase activity role is filled by His-451. Asn-454 is an NAD(+) binding site. The substrate site is built by Asn-501 and Tyr-661.

This sequence in the N-terminal section; belongs to the enoyl-CoA hydratase/isomerase family. It in the C-terminal section; belongs to the 3-hydroxyacyl-CoA dehydrogenase family. In terms of assembly, heterotetramer of two alpha chains (FadB) and two beta chains (FadA).

It catalyses the reaction a (3S)-3-hydroxyacyl-CoA + NAD(+) = a 3-oxoacyl-CoA + NADH + H(+). The catalysed reaction is a (3S)-3-hydroxyacyl-CoA = a (2E)-enoyl-CoA + H2O. It carries out the reaction a 4-saturated-(3S)-3-hydroxyacyl-CoA = a (3E)-enoyl-CoA + H2O. The enzyme catalyses (3S)-3-hydroxybutanoyl-CoA = (3R)-3-hydroxybutanoyl-CoA. It catalyses the reaction a (3Z)-enoyl-CoA = a 4-saturated (2E)-enoyl-CoA. The catalysed reaction is a (3E)-enoyl-CoA = a 4-saturated (2E)-enoyl-CoA. Its pathway is lipid metabolism; fatty acid beta-oxidation. Its function is as follows. Involved in the aerobic and anaerobic degradation of long-chain fatty acids via beta-oxidation cycle. Catalyzes the formation of 3-oxoacyl-CoA from enoyl-CoA via L-3-hydroxyacyl-CoA. It can also use D-3-hydroxyacyl-CoA and cis-3-enoyl-CoA as substrate. The chain is Fatty acid oxidation complex subunit alpha from Aeromonas salmonicida (strain A449).